The sequence spans 1178 residues: Mediator of RNA polymerase II transcription subunit 14 (1178 aa).

The span at 1-12 (MDNSVHNNSNTT) shows a compositional bias: polar residues. Disordered regions lie at residues 1–50 (MDNS…PITV) and 1064–1178 (LAGT…VVLD). Low complexity-rich tracts occupy residues 1074 to 1112 (PTQI…QGAA) and 1119 to 1164 (HQLQ…AQQR).

It belongs to the Mediator complex subunit 14 family. Component of the Mediator complex.

It is found in the nucleus. In terms of biological role, component of the Mediator complex, a coactivator involved in the regulated transcription of nearly all RNA polymerase II-dependent genes. Mediator functions as a bridge to convey information from gene-specific regulatory proteins to the basal RNA polymerase II transcription machinery. Mediator is recruited to promoters by direct interactions with regulatory proteins and serves as a scaffold for the assembly of a functional preinitiation complex with RNA polymerase II and the general transcription factors. The chain is Mediator of RNA polymerase II transcription subunit 14 (RGR1) from Chaetomium globosum (strain ATCC 6205 / CBS 148.51 / DSM 1962 / NBRC 6347 / NRRL 1970) (Soil fungus).